Here is a 316-residue protein sequence, read N- to C-terminus: Sorting nexin-20 (316 aa).

The disordered stretch occupies residues 1-57 (MASHKHPGSPGWTGPICQDMAGTTPKASAPRPDLPRPGPEDHLEAQGSPSSNSSMTT). Residue S3 is modified to Phosphoserine. The span at 47–57 (GSPSSNSSMTT) shows a compositional bias: polar residues. Positions 74-191 (VKLLFEIASA…DFLTRPELKE (118 aa)) constitute a PX domain. Positions 116, 118, 143, and 157 each coordinate a 1,2-diacyl-sn-glycero-3-phospho-(1D-myo-inositol-3-phosphate).

Belongs to the sorting nexin family. In terms of assembly, interacts with SELPLG. Interaction with SELPLG is controversial.

Its subcellular location is the early endosome membrane. The protein localises to the cell membrane. The protein resides in the cytoplasm. It localises to the nucleus. May play a role in cellular vesicle trafficking. Has been proposed to function as a sorting protein that targets SELPLG into endosomes, but has no effect on SELPLG internalization from the cell surface, or on SELPLG-mediated cell-cell adhesion. The protein is Sorting nexin-20 (SNX20) of Bos taurus (Bovine).